A 364-amino-acid polypeptide reads, in one-letter code: tRNA 2-selenouridine synthase (364 aa).

Positions 14-137 (LIADTPIIDV…LRQTAIQATI (124 aa)) constitute a Rhodanese domain. Residue cysteine 97 is the S-selanylcysteine intermediate of the active site.

The protein belongs to the SelU family. In terms of assembly, monomer.

It carries out the reaction 5-methylaminomethyl-2-thiouridine(34) in tRNA + selenophosphate + (2E)-geranyl diphosphate + H2O + H(+) = 5-methylaminomethyl-2-selenouridine(34) in tRNA + (2E)-thiogeraniol + phosphate + diphosphate. The enzyme catalyses 5-methylaminomethyl-2-thiouridine(34) in tRNA + (2E)-geranyl diphosphate = 5-methylaminomethyl-S-(2E)-geranyl-thiouridine(34) in tRNA + diphosphate. The catalysed reaction is 5-methylaminomethyl-S-(2E)-geranyl-thiouridine(34) in tRNA + selenophosphate + H(+) = 5-methylaminomethyl-2-(Se-phospho)selenouridine(34) in tRNA + (2E)-thiogeraniol. It catalyses the reaction 5-methylaminomethyl-2-(Se-phospho)selenouridine(34) in tRNA + H2O = 5-methylaminomethyl-2-selenouridine(34) in tRNA + phosphate. Functionally, involved in the post-transcriptional modification of the uridine at the wobble position (U34) of tRNA(Lys), tRNA(Glu) and tRNA(Gln). Catalyzes the conversion of 2-thiouridine (S2U-RNA) to 2-selenouridine (Se2U-RNA). Acts in a two-step process involving geranylation of 2-thiouridine (S2U) to S-geranyl-2-thiouridine (geS2U) and subsequent selenation of the latter derivative to 2-selenouridine (Se2U) in the tRNA chain. This is tRNA 2-selenouridine synthase from Shigella boydii serotype 18 (strain CDC 3083-94 / BS512).